The primary structure comprises 389 residues: MVDEKVIVDEVETRDAYRVAYVIHFLLGAGSLIPWNALITAVDYFGYLYPDKHVEKTFTVAYMSCSVLVLVLMMTWNTRMSYRVRMNLGFSMFIIAMMISPLIDWVWKGEKGENVSYMLMVGSVVLCGLADGVVGGSLIGSAGKLPRQYMQAIFAGTASSGIIISLLRIATKASLPQTPQGMRTSAHSYFIVSSTILLCCFISCNVLHKLPVMQQHLKFHQPLHSTLTIWMVGRKIKWPASGMLIIYSVTLSIFPGFIAENLKSQLLQSWYPILLITVYNISDFVGKSLTALYLWQSIKSATWACIVRLLFYPLFSACLRGPKWLRTEVPVVVLTFMLGLTNGYLTSVLMIMAPKTVHASEAELAAIFMVVFLGLGLVCGSVIGWLWLI.

10 helical membrane passes run 19–39, 57–77, 87–107, 119–139, 150–170, 187–207, 238–258, 266–286, 331–351, and 367–387; these read VAYV…NALI, TFTV…MTWN, NLGF…DWVW, LMVG…GSLI, MQAI…LRIA, HSYF…CNVL, WPAS…PGFI, LLQS…DFVG, VVVL…VLMI, and IFMV…GWLW.

It belongs to the SLC29A/ENT transporter (TC 2.A.57) family. In terms of tissue distribution, expressed in stems, flowers and siliques.

It is found in the cell membrane. In terms of biological role, may be involved in nucleoside transport. The sequence is that of Equilibrative nucleotide transporter 8 (ETN8) from Arabidopsis thaliana (Mouse-ear cress).